Here is a 361-residue protein sequence, read N- to C-terminus: tRNA-specific 2-thiouridylase MnmA (361 aa).

Residues 11–18 (GMSGGVDS) and methionine 37 each bind ATP. The tract at residues 97 to 99 (NPD) is interaction with target base in tRNA. Residue cysteine 102 is the Nucleophile of the active site. Cysteine 102 and cysteine 199 are joined by a disulfide. Glycine 126 lines the ATP pocket. An interaction with tRNA region spans residues 149–151 (KDQ). Residue cysteine 199 is the Cysteine persulfide intermediate of the active site. Positions 311 to 312 (RY) are interaction with tRNA.

Belongs to the MnmA/TRMU family.

It is found in the cytoplasm. The enzyme catalyses S-sulfanyl-L-cysteinyl-[protein] + uridine(34) in tRNA + AH2 + ATP = 2-thiouridine(34) in tRNA + L-cysteinyl-[protein] + A + AMP + diphosphate + H(+). Catalyzes the 2-thiolation of uridine at the wobble position (U34) of tRNA, leading to the formation of s(2)U34. The sequence is that of tRNA-specific 2-thiouridylase MnmA from Cupriavidus necator (strain ATCC 17699 / DSM 428 / KCTC 22496 / NCIMB 10442 / H16 / Stanier 337) (Ralstonia eutropha).